The following is a 280-amino-acid chain: Formamidopyrimidine-DNA glycosylase (280 aa).

The Schiff-base intermediate with DNA role is filled by Pro-2. The active-site Proton donor is the Glu-3. Lys-59 serves as the catalytic Proton donor; for beta-elimination activity. Residues His-92 and Arg-111 each contribute to the DNA site. Residues Asn-239 to Gln-273 form an FPG-type zinc finger. Arg-263 serves as the catalytic Proton donor; for delta-elimination activity.

Belongs to the FPG family. As to quaternary structure, monomer. It depends on Zn(2+) as a cofactor.

It catalyses the reaction Hydrolysis of DNA containing ring-opened 7-methylguanine residues, releasing 2,6-diamino-4-hydroxy-5-(N-methyl)formamidopyrimidine.. It carries out the reaction 2'-deoxyribonucleotide-(2'-deoxyribose 5'-phosphate)-2'-deoxyribonucleotide-DNA = a 3'-end 2'-deoxyribonucleotide-(2,3-dehydro-2,3-deoxyribose 5'-phosphate)-DNA + a 5'-end 5'-phospho-2'-deoxyribonucleoside-DNA + H(+). Functionally, involved in base excision repair of DNA damaged by oxidation or by mutagenic agents. Acts as a DNA glycosylase that recognizes and removes damaged bases. Has a preference for oxidized purines, such as 7,8-dihydro-8-oxoguanine (8-oxoG). Has AP (apurinic/apyrimidinic) lyase activity and introduces nicks in the DNA strand. Cleaves the DNA backbone by beta-delta elimination to generate a single-strand break at the site of the removed base with both 3'- and 5'-phosphates. The sequence is that of Formamidopyrimidine-DNA glycosylase from Enterococcus faecalis (strain ATCC 700802 / V583).